The chain runs to 52 residues: MCYGYGCGCGSFCRLGYGCGYEGCRYGCGHRGCGDGCCCPSCYRRYRFTGFY.

The protein belongs to the KRTAP type 19 family. As to quaternary structure, interacts with hair keratins.

In the hair cortex, hair keratin intermediate filaments are embedded in an interfilamentous matrix, consisting of hair keratin-associated proteins (KRTAP), which are essential for the formation of a rigid and resistant hair shaft through their extensive disulfide bond cross-linking with abundant cysteine residues of hair keratins. The matrix proteins include the high-sulfur and high-glycine-tyrosine keratins. In Homo sapiens (Human), this protein is Keratin-associated protein 19-2 (KRTAP19-2).